Here is a 672-residue protein sequence, read N- to C-terminus: Glycerophosphocholine phosphodiesterase GPCPD1 (672 aa).

A CBM20 domain is found at Met-1–Ile-115. Substrate-binding positions include Lys-70 and His-88–Lys-89. Residues Ser-175 and Ser-424 each carry the phosphoserine modification. The GP-PDE domain occupies Pro-318–Gln-618. Tyr-608 is subject to Phosphotyrosine.

The protein belongs to the glycerophosphoryl diester phosphodiesterase family. As to expression, widely expressed, with highest expression in spinal chord.

It localises to the cytoplasm. It is found in the cytosol. The enzyme catalyses sn-glycerol 3-phosphocholine + H2O = sn-glycerol 3-phosphate + choline + H(+). Functionally, may be involved in the negative regulation of skeletal muscle differentiation, independently of its glycerophosphocholine phosphodiesterase activity. The chain is Glycerophosphocholine phosphodiesterase GPCPD1 (GPCPD1) from Homo sapiens (Human).